The primary structure comprises 197 residues: Probable nicotinate-nucleotide adenylyltransferase (197 aa).

It belongs to the NadD family.

The catalysed reaction is nicotinate beta-D-ribonucleotide + ATP + H(+) = deamido-NAD(+) + diphosphate. It participates in cofactor biosynthesis; NAD(+) biosynthesis; deamido-NAD(+) from nicotinate D-ribonucleotide: step 1/1. Functionally, catalyzes the reversible adenylation of nicotinate mononucleotide (NaMN) to nicotinic acid adenine dinucleotide (NaAD). The sequence is that of Probable nicotinate-nucleotide adenylyltransferase from Leptospira borgpetersenii serovar Hardjo-bovis (strain JB197).